The following is a 200-amino-acid chain: MLRIGLTGGIGSGKSTVADLLSSEGFLIVDADQVARDIVEPGQPALAELAEAFGQDILKPDGTLDRAGLAAKAFVSEEQTALLNAITHPRIAEESARRFNEAEDQGAKVAVYDMPLLVEKGLDRKMDLVVVVDVDVEERVRRLVEKRGLTEDDVRRRIASQVPDDVRLKAADIVVDNNGTLEDLHAEASKLIAEILSRVN.

Residues 3–200 enclose the DPCK domain; the sequence is RIGLTGGIGS…LIAEILSRVN (198 aa). 11–16 serves as a coordination point for ATP; it reads GSGKST.

This sequence belongs to the CoaE family.

It is found in the cytoplasm. The enzyme catalyses 3'-dephospho-CoA + ATP = ADP + CoA + H(+). Its pathway is cofactor biosynthesis; coenzyme A biosynthesis; CoA from (R)-pantothenate: step 5/5. Functionally, catalyzes the phosphorylation of the 3'-hydroxyl group of dephosphocoenzyme A to form coenzyme A. This is Dephospho-CoA kinase from Corynebacterium glutamicum (strain ATCC 13032 / DSM 20300 / JCM 1318 / BCRC 11384 / CCUG 27702 / LMG 3730 / NBRC 12168 / NCIMB 10025 / NRRL B-2784 / 534).